Reading from the N-terminus, the 488-residue chain is 3-octaprenyl-4-hydroxybenzoate carboxy-lyase (488 aa).

Residue asparagine 172 coordinates Mn(2+). Prenylated FMN is bound by residues 175–177 (IYR), 189–191 (RWL), and 194–195 (RG). Glutamate 238 lines the Mn(2+) pocket. Aspartate 287 functions as the Proton donor in the catalytic mechanism.

The protein belongs to the UbiD family. As to quaternary structure, homohexamer. Prenylated FMN serves as cofactor. Mn(2+) is required as a cofactor.

The protein resides in the cell membrane. It carries out the reaction a 4-hydroxy-3-(all-trans-polyprenyl)benzoate + H(+) = a 2-(all-trans-polyprenyl)phenol + CO2. It participates in cofactor biosynthesis; ubiquinone biosynthesis. Catalyzes the decarboxylation of 3-octaprenyl-4-hydroxy benzoate to 2-octaprenylphenol, an intermediate step in ubiquinone biosynthesis. This Pseudomonas fluorescens (strain SBW25) protein is 3-octaprenyl-4-hydroxybenzoate carboxy-lyase.